Consider the following 335-residue polypeptide: Nucleoid-associated protein Ent638_2782 (335 aa).

Belongs to the YejK family.

The protein resides in the cytoplasm. Its subcellular location is the nucleoid. This Enterobacter sp. (strain 638) protein is Nucleoid-associated protein Ent638_2782.